Here is a 344-residue protein sequence, read N- to C-terminus: MGGLMKKNTLILGIESSCDETAASVVKNGCEIVSSVVASQIESHKRFGGVVPEIASRHHVEQITLVIEEALKQANVTMDDLDGVAVTEGPGLVGALLIGVNAAKTLAFMHNLPLVGVHHIAGHIYANRFETEFQFPLLSLVVSGGHTELVLMKADNEFEIIGETRDDAAGEAYDKVARTLGLAYPGGVQIDKLAKDGEDTFHFPRAMMDDGSFDFSFSGLKSSFINTLHNLRQRGEEPNPNDMAASFQASVVDVLVSKTIRAAKQHGVKQLLLAGGVAANQGLRERLIQEVKLELPDTELIIPPLSLCGDNAAMIAAAGTVSFLQGKRSNYDMNANPGLLLEDI.

Fe cation contacts are provided by H119 and H123. Substrate is bound by residues 141 to 145, D174, G187, D191, and N280; that span reads VVSGG. D310 contacts Fe cation.

It belongs to the KAE1 / TsaD family. Requires Fe(2+) as cofactor.

The protein localises to the cytoplasm. It catalyses the reaction L-threonylcarbamoyladenylate + adenosine(37) in tRNA = N(6)-L-threonylcarbamoyladenosine(37) in tRNA + AMP + H(+). In terms of biological role, required for the formation of a threonylcarbamoyl group on adenosine at position 37 (t(6)A37) in tRNAs that read codons beginning with adenine. Is involved in the transfer of the threonylcarbamoyl moiety of threonylcarbamoyl-AMP (TC-AMP) to the N6 group of A37, together with TsaE and TsaB. TsaD likely plays a direct catalytic role in this reaction. This chain is tRNA N6-adenosine threonylcarbamoyltransferase, found in Listeria innocua serovar 6a (strain ATCC BAA-680 / CLIP 11262).